The chain runs to 617 residues: Proline--tRNA ligase (617 aa).

The protein belongs to the class-II aminoacyl-tRNA synthetase family. ProS type 1 subfamily. Homodimer.

The protein localises to the cytoplasm. The enzyme catalyses tRNA(Pro) + L-proline + ATP = L-prolyl-tRNA(Pro) + AMP + diphosphate. In terms of biological role, catalyzes the attachment of proline to tRNA(Pro) in a two-step reaction: proline is first activated by ATP to form Pro-AMP and then transferred to the acceptor end of tRNA(Pro). As ProRS can inadvertently accommodate and process non-cognate amino acids such as alanine and cysteine, to avoid such errors it has two additional distinct editing activities against alanine. One activity is designated as 'pretransfer' editing and involves the tRNA(Pro)-independent hydrolysis of activated Ala-AMP. The other activity is designated 'posttransfer' editing and involves deacylation of mischarged Ala-tRNA(Pro). The misacylated Cys-tRNA(Pro) is not edited by ProRS. This is Proline--tRNA ligase from Streptococcus pneumoniae serotype 4 (strain ATCC BAA-334 / TIGR4).